The following is a 1380-amino-acid chain: DNA-directed RNA polymerase subunit beta (1380 aa).

Belongs to the RNA polymerase beta chain family. In terms of assembly, the RNAP catalytic core consists of 2 alpha, 1 beta, 1 beta' and 1 omega subunit. When a sigma factor is associated with the core the holoenzyme is formed, which can initiate transcription.

It carries out the reaction RNA(n) + a ribonucleoside 5'-triphosphate = RNA(n+1) + diphosphate. Its function is as follows. DNA-dependent RNA polymerase catalyzes the transcription of DNA into RNA using the four ribonucleoside triphosphates as substrates. The protein is DNA-directed RNA polymerase subunit beta of Alcanivorax borkumensis (strain ATCC 700651 / DSM 11573 / NCIMB 13689 / SK2).